The following is a 614-amino-acid chain: DNA mismatch repair protein MutL (614 aa).

Residues 355–411 (PLSTGRVSEADPSNYATQSKFDEKPRESGSQGQSSSISAPSSYSRGGEYSARSQPEL) form a disordered region. Residues 382–401 (SGSQGQSSSISAPSSYSRGG) are compositionally biased toward low complexity.

The protein belongs to the DNA mismatch repair MutL/HexB family.

This protein is involved in the repair of mismatches in DNA. It is required for dam-dependent methyl-directed DNA mismatch repair. May act as a 'molecular matchmaker', a protein that promotes the formation of a stable complex between two or more DNA-binding proteins in an ATP-dependent manner without itself being part of a final effector complex. The polypeptide is DNA mismatch repair protein MutL (Shewanella woodyi (strain ATCC 51908 / MS32)).